A 303-amino-acid chain; its full sequence is N-acetyl-D-glucosamine kinase (303 aa).

ATP-binding positions include 4–11 and 133–140; these read GFDIGGTK and GVGGGLIF. Zn(2+)-binding residues include His157, Cys177, Cys179, and Cys184.

This sequence belongs to the ROK (NagC/XylR) family. NagK subfamily.

The catalysed reaction is N-acetyl-D-glucosamine + ATP = N-acetyl-D-glucosamine 6-phosphate + ADP + H(+). It participates in cell wall biogenesis; peptidoglycan recycling. Catalyzes the phosphorylation of N-acetyl-D-glucosamine (GlcNAc) derived from cell-wall degradation, yielding GlcNAc-6-P. The chain is N-acetyl-D-glucosamine kinase from Shigella boydii serotype 4 (strain Sb227).